Here is a 161-residue protein sequence, read N- to C-terminus: Allophycocyanin beta chain (161 aa).

N71 carries the post-translational modification N4-methylasparagine. C81 contributes to the (2R,3E)-phycocyanobilin binding site.

It belongs to the phycobiliprotein family. As to quaternary structure, heterodimer of an alpha and a beta chain. In terms of processing, contains one covalently linked phycocyanobilin chromophore.

It localises to the cellular thylakoid membrane. Its function is as follows. Light-harvesting photosynthetic bile pigment-protein from the phycobiliprotein complex. Allophycocyanin has a maximum absorption at approximately 650 nanometers. The protein is Allophycocyanin beta chain (apcB) of Arthrospira platensis (Spirulina platensis).